Here is a 215-residue protein sequence, read N- to C-terminus: Ras-related protein Rab-5A (215 aa).

Positions 29, 30, 32, 33, 34, 35, 46, 47, 52, and 78 each coordinate GTP. Mg(2+) is bound at residue Ser34. 2 consecutive short sequence motifs (switch) follow at residues 44–56 (QFHEFQESTIGAA) and 77–93 (AGQERYHSLAPMYYRGA). Thr52 provides a ligand contact to Mg(2+). Phosphoserine; by LRRK2 is present on Ser84. A (Microbial infection) N-beta-linked (GlcNAc) arginine glycan is attached at Arg120. Residues Asn133, Lys134, Asp136, Ala164, and Lys165 each contribute to the GTP site. The tract at residues 181–215 (LPKNEPQNPGANSARGRGVDLTEPTQPTRNQCCSN) is disordered. The span at 203 to 215 (EPTQPTRNQCCSN) shows a compositional bias: polar residues. S-geranylgeranyl cysteine attachment occurs at residues Cys212 and Cys213.

Belongs to the small GTPase superfamily. Rab family. As to quaternary structure, interacts with SGSM1 and SGSM3. Interacts with PIK3CB. Interacts with GDI1; this promotes dissociation from membranes; phosphorylation at Ser-84 disrupts this interaction. Interacts with GDI2; phosphorylation at Ser-84 disrupts the interaction. Interacts with EEA1. Interacts with RIN1 and GAPVD1, which regulate its pathway, probably by acting as a GEF. Interacts with RINL. Interacts with ALS2CL, SUN2, ZFYVE20 and RUFY1. Interacts with RABEP1; one RABEP1 homodimer binds two RAB5A chains, but at opposite sides of the dimer. Interacts with OCRL. Interacts with INPP5F. May be a component of a complex composed of RAB5A, DYN2 and PIK3C3. Does not interact with BLOC-3 complex (heterodimer of HPS1 and HPS4). Interacts with CLN5. Interacts with APPL2. Interacts with F8A1/F8A2/F8A3. Found in a complex with F8A1/F8A2/F8A3, HTT and RAB5A; mediates the recruitment of HTT by RAB5A onto early endosomes. Interacts with ATP9A. Interacts with PPP1R21; mediates the recruitment of FERRY complex by RAB5A onto early endosomes. Mg(2+) is required as a cofactor. Phosphorylation of Ser-84 in the switch II region by LRRK2 prevents the association of RAB regulatory proteins, including RAB GDP dissociation inhibitors GDI1 and GDI2. In terms of processing, (Microbial infection) Glycosylated on arginine residues by S.typhimurium protein Ssek3.

It localises to the cell membrane. Its subcellular location is the early endosome membrane. The protein resides in the melanosome. It is found in the cytoplasmic vesicle. The protein localises to the cell projection. It localises to the ruffle. Its subcellular location is the membrane. The protein resides in the cytoplasm. It is found in the cytosol. The protein localises to the phagosome membrane. It localises to the endosome membrane. The enzyme catalyses GTP + H2O = GDP + phosphate + H(+). Its activity is regulated as follows. Regulated by guanine nucleotide exchange factors (GEFs) including RINL, which promote the exchange of bound GDP for free GTP. Regulated by GTPase activating proteins (GAPs) which increase the GTP hydrolysis activity. Inhibited by GDP dissociation inhibitors (GDIs). Functionally, the small GTPases Rab are key regulators of intracellular membrane trafficking, from the formation of transport vesicles to their fusion with membranes. Rabs cycle between an inactive GDP-bound form and an active GTP-bound form that is able to recruit to membranes different sets of downstream effectors directly responsible for vesicle formation, movement, tethering and fusion. RAB5A is required for the fusion of plasma membranes and early endosomes. Contributes to the regulation of filopodia extension. Required for the exosomal release of SDCBP, CD63, PDCD6IP and syndecan. Regulates maturation of apoptotic cell-containing phagosomes, probably downstream of DYN2 and PIK3C3. This is Ras-related protein Rab-5A from Homo sapiens (Human).